Here is a 734-residue protein sequence, read N- to C-terminus: Photosystem I P700 chlorophyll a apoprotein A2 (734 aa).

8 consecutive transmembrane segments (helical) span residues 46–69, 135–158, 175–199, 273–291, 330–353, 369–395, 417–439, and 517–535; these read IFASHFGQLAIIFLWTSGNLFHVA, LYTGALFLLFLSAISLIAGWLHLQ, LNHHLSGLFGVSSLAWTGHLVHVAI, MAHHHLAIAFIFLVAGHMY, IHFQLGLALASLGVITSLVAQHMY, AALYTHHQYIAGFIMTGAFAHGAIFFI, AIISHLSWASLFLGFHTLGLYVH, and FLVHHAIALGLHTTTLILV. 2 residues coordinate [4Fe-4S] cluster: Cys559 and Cys568. The next 2 membrane-spanning stretches (helical) occupy residues 575–596 and 643–665; these read AFYLAVFWMLNTIGWVTFYWHW and LSVWAWMFLFGHLVWATGFMFLI. Chlorophyll a is bound by residues His654, Met662, and Tyr670. Trp671 serves as a coordination point for phylloquinone. A helical membrane pass occupies residues 707-727; it reads LVGLAHFSVGYIFTYAAFLIA.

This sequence belongs to the PsaA/PsaB family. The PsaA/B heterodimer binds the P700 chlorophyll special pair and subsequent electron acceptors. PSI consists of a core antenna complex that captures photons, and an electron transfer chain that converts photonic excitation into a charge separation. The eukaryotic PSI reaction center is composed of at least 11 subunits. It depends on P700 is a chlorophyll a/chlorophyll a' dimer, A0 is one or more chlorophyll a, A1 is one or both phylloquinones and FX is a shared 4Fe-4S iron-sulfur center. as a cofactor.

The protein resides in the plastid. It is found in the chloroplast thylakoid membrane. It carries out the reaction reduced [plastocyanin] + hnu + oxidized [2Fe-2S]-[ferredoxin] = oxidized [plastocyanin] + reduced [2Fe-2S]-[ferredoxin]. Its function is as follows. PsaA and PsaB bind P700, the primary electron donor of photosystem I (PSI), as well as the electron acceptors A0, A1 and FX. PSI is a plastocyanin-ferredoxin oxidoreductase, converting photonic excitation into a charge separation, which transfers an electron from the donor P700 chlorophyll pair to the spectroscopically characterized acceptors A0, A1, FX, FA and FB in turn. Oxidized P700 is reduced on the lumenal side of the thylakoid membrane by plastocyanin. The chain is Photosystem I P700 chlorophyll a apoprotein A2 from Nandina domestica (Heavenly bamboo).